A 372-amino-acid polypeptide reads, in one-letter code: Homoserine O-acetyltransferase (372 aa).

An AB hydrolase-1 domain is found at 43–353; the sequence is NAILIFHALT…DKGHDSFLLK (311 aa). Residue serine 148 is the Nucleophile of the active site. Arginine 218 is a substrate binding site. Catalysis depends on residues aspartate 314 and histidine 347. Substrate is bound at residue aspartate 348.

This sequence belongs to the AB hydrolase superfamily. MetX family. Homodimer.

The protein resides in the cytoplasm. It catalyses the reaction L-homoserine + acetyl-CoA = O-acetyl-L-homoserine + CoA. Its pathway is amino-acid biosynthesis; L-methionine biosynthesis via de novo pathway; O-acetyl-L-homoserine from L-homoserine: step 1/1. Transfers an acetyl group from acetyl-CoA to L-homoserine, forming acetyl-L-homoserine. The polypeptide is Homoserine O-acetyltransferase (Pelagibacter ubique (strain HTCC1062)).